Reading from the N-terminus, the 204-residue chain is Large ribosomal subunit protein bL25 (204 aa).

Belongs to the bacterial ribosomal protein bL25 family. CTC subfamily. Part of the 50S ribosomal subunit; part of the 5S rRNA/L5/L18/L25 subcomplex. Contacts the 5S rRNA. Binds to the 5S rRNA independently of L5 and L18.

Functionally, this is one of the proteins that binds to the 5S RNA in the ribosome where it forms part of the central protuberance. This Pseudomonas syringae pv. syringae (strain B728a) protein is Large ribosomal subunit protein bL25.